A 335-amino-acid polypeptide reads, in one-letter code: Histidinol-phosphate aminotransferase (335 aa).

K202 carries the post-translational modification N6-(pyridoxal phosphate)lysine.

This sequence belongs to the class-II pyridoxal-phosphate-dependent aminotransferase family. Histidinol-phosphate aminotransferase subfamily. Homodimer. Requires pyridoxal 5'-phosphate as cofactor.

It catalyses the reaction L-histidinol phosphate + 2-oxoglutarate = 3-(imidazol-4-yl)-2-oxopropyl phosphate + L-glutamate. It participates in amino-acid biosynthesis; L-histidine biosynthesis; L-histidine from 5-phospho-alpha-D-ribose 1-diphosphate: step 7/9. The polypeptide is Histidinol-phosphate aminotransferase (Thermotoga maritima (strain ATCC 43589 / DSM 3109 / JCM 10099 / NBRC 100826 / MSB8)).